Consider the following 513-residue polypeptide: Histidine ammonia-lyase (513 aa).

The 5-imidazolinone (Ala-Gly) cross-link spans 145–147 (ASG). The residue at position 146 (Ser-146) is a 2,3-didehydroalanine (Ser).

Belongs to the PAL/histidase family. Contains an active site 4-methylidene-imidazol-5-one (MIO), which is formed autocatalytically by cyclization and dehydration of residues Ala-Ser-Gly.

It is found in the cytoplasm. It carries out the reaction L-histidine = trans-urocanate + NH4(+). Its pathway is amino-acid degradation; L-histidine degradation into L-glutamate; N-formimidoyl-L-glutamate from L-histidine: step 1/3. The sequence is that of Histidine ammonia-lyase from Vibrio vulnificus (strain YJ016).